The chain runs to 296 residues: Protein RarD (296 aa).

Residues methionine 1–leucine 11 are Cytoplasmic-facing. Residues leucine 12 to proline 34 form a helical membrane-spanning segment. Positions phenylalanine 18–tryptophan 145 constitute an EamA domain. Residues alanine 35–glutamate 37 lie on the Periplasmic side of the membrane. A helical transmembrane segment spans residues isoleucine 38 to tryptophan 60. Residues serine 61–lysine 72 lie on the Cytoplasmic side of the membrane. Residues isoleucine 73–asparagine 95 traverse the membrane as a helical segment. The Periplasmic portion of the chain corresponds to asparagine 96–methionine 99. Residues leucine 100 to glycine 122 traverse the membrane as a helical segment. At glutamate 123 to methionine 128 the chain is on the cytoplasmic side. Residues glutamine 129–threonine 146 traverse the membrane as a helical segment. Residues phenylalanine 147 to serine 149 lie on the Periplasmic side of the membrane. The helical transmembrane segment at leucine 150–valine 167 threads the bilayer. Topologically, residues arginine 168 to methionine 179 are cytoplasmic. The chain crosses the membrane as a helical span at residues leucine 180–isoleucine 197. Topologically, residues alanine 198 to serine 211 are periplasmic. A helical membrane pass occupies residues leucine 212–alanine 234. The Cytoplasmic segment spans residues threonine 235 to arginine 238. A helical transmembrane segment spans residues leucine 239–tyrosine 261. Over glycine 262–methionine 270 the chain is Periplasmic. Residues valine 271–threonine 290 form a helical membrane-spanning segment. The Cytoplasmic segment spans residues glutamine 291 to lysine 296.

This sequence belongs to the EamA transporter family.

It is found in the cell inner membrane. The protein is Protein RarD (rarD) of Escherichia coli (strain K12).